Consider the following 688-residue polypeptide: Protein sel-1 homolog 2 (688 aa).

Positions 1–18 are cleaved as a signal peptide; that stretch reads MNPLALLVEILIIIEVTT. Topologically, residues 19–662 are extracellular; the sequence is KNSEAERYNR…KWKWLKLDST (644 aa). An N-linked (GlcNAc...) asparagine glycan is attached at Asn-34. 11 Sel1-like repeats span residues 107-142, 143-178, 179-214, 215-250, 297-333, 334-370, 371-406, 407-442, 443-478, 551-586, and 588-623; these read GDELFKMGNKILQESKSQKQKTEAYTFFTRAADMGN, LKAMEKMADALLFGSFGMQNITAAIQLYESLAKEGS, YKAQNALGFLSSYGIGMEYDQAKALIYYTFGSAGGS, MMSQMILGYRYLSGINVLQNCEVALNHYKKVADYIA, VQIQVSLGQLHLIGRKGLDQDYSKALYYFLKAAKAGS, ANAMAFIGKMYLEGNAAAPQNNATAFKYFSMAASKGN, AIGLHGLGLLYFHGKGVPVNYGEALKYFQKAAEKGW, PNAQFHLGFMYYSGSGVWKDYKLAFKYFYLASQSGQ, PLAIYYLAEMYATGTGVLRSCRTAVEPYKGVCELGH, AFARVKIGDYHYYGYGTKKDYETAATHYSIAADKHH, and AQAMFNLAYMYEHGLGIAQDIHLARRLYDMAAQTSP. A glycan (N-linked (GlcNAc...) asparagine) is linked at Asn-162. A helical transmembrane segment spans residues 663–683; it reads IGPYWDLLVIGLIVVVLIFLL. The Cytoplasmic segment spans residues 684-688; that stretch reads RNHHR.

Belongs to the sel-1 family.

It localises to the membrane. The protein resides in the cell projection. Its subcellular location is the cilium. The protein localises to the nucleus speckle. The chain is Protein sel-1 homolog 2 (Sel1l2) from Rattus norvegicus (Rat).